The sequence spans 333 residues: Electron transfer flavoprotein subunit alpha, mitochondrial (333 aa).

A mitochondrion-targeting transit peptide spans methionine 1–phenylalanine 19. The interval glutamine 20–leucine 204 is domain I. Lysine 59 is modified (N6-acetyllysine; alternate). Lysine 59 carries the post-translational modification N6-succinyllysine; alternate. Lysine 62 carries the post-translational modification N6-acetyllysine. N6-acetyllysine; alternate is present on lysine 69. Residue lysine 69 is modified to N6-succinyllysine; alternate. The residue at position 75 (lysine 75) is an N6-acetyllysine. Position 93 is a phosphothreonine (threonine 93). Lysine 101 and lysine 139 each carry N6-acetyllysine. The residue at position 140 (serine 140) is a Phosphoserine. Lysine 158 carries the N6-acetyllysine; alternate modification. Lysine 158 carries the N6-succinyllysine; alternate modification. Residue lysine 164 is modified to N6-acetyllysine. At lysine 187 the chain carries N6-succinyllysine. Lysine 203 carries the N6-acetyllysine; alternate modification. Lysine 203 bears the N6-succinyllysine; alternate mark. The interval threonine 205 to lysine 333 is domain II. N6-succinyllysine is present on lysine 216. Arginine 223 lines the FAD pocket. An N6-acetyllysine; alternate mark is found at lysine 226 and lysine 232. Lysine 226 and lysine 232 each carry N6-succinyllysine; alternate. FAD contacts are provided by residues serine 248, valine 263–threonine 266, serine 281–histidine 286, and asparagine 300. The residue at position 301 (lysine 301) is an N6-succinyllysine. Aspartate 318 to leucine 319 is a binding site for FAD.

It belongs to the ETF alpha-subunit/FixB family. Heterodimer composed of ETFA and ETFB. Identified in a complex that contains ETFA, ETFB and ETFRF1. Interaction with ETFRF1 promotes dissociation of the bound FAD and loss of electron transfer activity. Interacts with TASOR. FAD serves as cofactor.

The protein localises to the mitochondrion matrix. Its function is as follows. Heterodimeric electron transfer flavoprotein that accepts electrons from several mitochondrial dehydrogenases, including acyl-CoA dehydrogenases, glutaryl-CoA and sarcosine dehydrogenase. It transfers the electrons to the main mitochondrial respiratory chain via ETF-ubiquinone oxidoreductase (ETF dehydrogenase). Required for normal mitochondrial fatty acid oxidation and normal amino acid metabolism. The polypeptide is Electron transfer flavoprotein subunit alpha, mitochondrial (ETFA) (Pongo abelii (Sumatran orangutan)).